A 502-amino-acid polypeptide reads, in one-letter code: Probable malate:quinone oxidoreductase (502 aa).

Belongs to the MQO family. The cofactor is FAD.

The enzyme catalyses (S)-malate + a quinone = a quinol + oxaloacetate. Its pathway is carbohydrate metabolism; tricarboxylic acid cycle; oxaloacetate from (S)-malate (quinone route): step 1/1. This is Probable malate:quinone oxidoreductase from Parasynechococcus marenigrum (strain WH8102).